The primary structure comprises 541 residues: Chaperonin GroEL (541 aa).

Residues 29–32 (TLGP), 86–90 (DGTTT), Gly413, 478–480 (NAA), and Asp494 contribute to the ATP site.

It belongs to the chaperonin (HSP60) family. In terms of assembly, forms a cylinder of 14 subunits composed of two heptameric rings stacked back-to-back. Interacts with the co-chaperonin GroES.

Its subcellular location is the cytoplasm. The catalysed reaction is ATP + H2O + a folded polypeptide = ADP + phosphate + an unfolded polypeptide.. In terms of biological role, together with its co-chaperonin GroES, plays an essential role in assisting protein folding. The GroEL-GroES system forms a nano-cage that allows encapsulation of the non-native substrate proteins and provides a physical environment optimized to promote and accelerate protein folding. In Agathobacter rectalis (strain ATCC 33656 / DSM 3377 / JCM 17463 / KCTC 5835 / VPI 0990) (Eubacterium rectale), this protein is Chaperonin GroEL.